The chain runs to 1681 residues: Probable clathrin heavy chain 1 (1681 aa).

7 WD40-like repeat regions span residues Asn-22–Ser-65, Ala-66–Asp-105, Val-106–Ala-147, Gly-148–Glu-193, Gly-194–Ala-255, Gly-256–Asp-299, and Thr-300–Asp-328. 7 CHCR repeats span residues Ser-539–Val-685, Ala-688–Ala-830, Ile-835–Asp-974, Leu-981–Ala-1126, Phe-1130–Ala-1271, Leu-1276–Asn-1422, and Leu-1425–Phe-1568. The span at Glu-1616 to Glu-1628 shows a compositional bias: basic and acidic residues. Positions Glu-1616–Met-1635 are disordered.

This sequence belongs to the clathrin heavy chain family. As to quaternary structure, clathrin triskelions, composed of 3 heavy chains and 3 light chains, are the basic subunits of the clathrin coat. May interact with beta arrestin arr-1.

Its subcellular location is the cytoplasmic vesicle membrane. It is found in the membrane. It localises to the coated pit. In terms of biological role, clathrin is the major protein of the polyhedral coat of coated pits and vesicles. May play a role in yolk protein clatherin-mediated endocytosis by oocytes during oogenesis. The sequence is that of Probable clathrin heavy chain 1 (chc-1) from Caenorhabditis elegans.